Reading from the N-terminus, the 246-residue chain is 3-deoxy-manno-octulosonate cytidylyltransferase (246 aa).

Belongs to the KdsB family.

It localises to the cytoplasm. The catalysed reaction is 3-deoxy-alpha-D-manno-oct-2-ulosonate + CTP = CMP-3-deoxy-beta-D-manno-octulosonate + diphosphate. It participates in nucleotide-sugar biosynthesis; CMP-3-deoxy-D-manno-octulosonate biosynthesis; CMP-3-deoxy-D-manno-octulosonate from 3-deoxy-D-manno-octulosonate and CTP: step 1/1. Its pathway is bacterial outer membrane biogenesis; lipopolysaccharide biosynthesis. Activates KDO (a required 8-carbon sugar) for incorporation into bacterial lipopolysaccharide in Gram-negative bacteria. The polypeptide is 3-deoxy-manno-octulosonate cytidylyltransferase (Rickettsia akari (strain Hartford)).